A 354-amino-acid polypeptide reads, in one-letter code: Selenide, water dikinase (354 aa).

Residue cysteine 23 is part of the active site. ATP is bound by residues lysine 26 and 54–56; that span reads TSD. Aspartate 57 contacts Mg(2+). ATP contacts are provided by residues aspartate 74, aspartate 97, and 145–147; that span reads GHS. Residue aspartate 97 coordinates Mg(2+). Aspartate 233 lines the Mg(2+) pocket.

It belongs to the selenophosphate synthase 1 family. Class I subfamily. As to quaternary structure, homodimer. Requires Mg(2+) as cofactor.

The enzyme catalyses hydrogenselenide + ATP + H2O = selenophosphate + AMP + phosphate + 2 H(+). Synthesizes selenophosphate from selenide and ATP. The polypeptide is Selenide, water dikinase (Burkholderia orbicola (strain MC0-3)).